Consider the following 267-residue polypeptide: Hydroxyethylthiazole kinase (267 aa).

A substrate-binding site is contributed by M48. ATP is bound by residues R124 and S170. G197 serves as a coordination point for substrate.

The protein belongs to the Thz kinase family. Mg(2+) serves as cofactor.

It carries out the reaction 5-(2-hydroxyethyl)-4-methylthiazole + ATP = 4-methyl-5-(2-phosphooxyethyl)-thiazole + ADP + H(+). It participates in cofactor biosynthesis; thiamine diphosphate biosynthesis; 4-methyl-5-(2-phosphoethyl)-thiazole from 5-(2-hydroxyethyl)-4-methylthiazole: step 1/1. Catalyzes the phosphorylation of the hydroxyl group of 4-methyl-5-beta-hydroxyethylthiazole (THZ). This is Hydroxyethylthiazole kinase from Aliivibrio fischeri (strain ATCC 700601 / ES114) (Vibrio fischeri).